The sequence spans 303 residues: 2-dehydropantoate 2-reductase (303 aa).

NADP(+)-binding positions include 7–12 (GPGSLG), Lys78, Asn103, and Ala129. The active-site Proton donor is Lys185. Residues Lys185, Asn189, Asn193, Asn203, and 252–255 (NESS) contribute to the substrate site. Glu267 lines the NADP(+) pocket.

It belongs to the ketopantoate reductase family.

Its subcellular location is the cytoplasm. The enzyme catalyses (R)-pantoate + NAD(+) = 2-dehydropantoate + NADH + H(+). The catalysed reaction is (R)-pantoate + NADP(+) = 2-dehydropantoate + NADPH + H(+). The protein operates within cofactor biosynthesis; coenzyme A biosynthesis. Functionally, catalyzes the NAD(P)H-dependent reduction of ketopantoate into pantoic acid. This is 2-dehydropantoate 2-reductase from Halobacterium salinarum (strain ATCC 700922 / JCM 11081 / NRC-1) (Halobacterium halobium).